The primary structure comprises 175 residues: Cytidylate kinase (175 aa).

7-15 (GQPGSGKTS) lines the ATP pocket.

This sequence belongs to the cytidylate kinase family. Type 2 subfamily.

It localises to the cytoplasm. It carries out the reaction CMP + ATP = CDP + ADP. It catalyses the reaction dCMP + ATP = dCDP + ADP. This chain is Cytidylate kinase, found in Methanocella arvoryzae (strain DSM 22066 / NBRC 105507 / MRE50).